The sequence spans 417 residues: NADH-quinone oxidoreductase subunit D (417 aa).

The protein belongs to the complex I 49 kDa subunit family. As to quaternary structure, NDH-1 is composed of 14 different subunits. Subunits NuoB, C, D, E, F, and G constitute the peripheral sector of the complex.

Its subcellular location is the cell inner membrane. The enzyme catalyses a quinone + NADH + 5 H(+)(in) = a quinol + NAD(+) + 4 H(+)(out). In terms of biological role, NDH-1 shuttles electrons from NADH, via FMN and iron-sulfur (Fe-S) centers, to quinones in the respiratory chain. The immediate electron acceptor for the enzyme in this species is believed to be ubiquinone. Couples the redox reaction to proton translocation (for every two electrons transferred, four hydrogen ions are translocated across the cytoplasmic membrane), and thus conserves the redox energy in a proton gradient. The chain is NADH-quinone oxidoreductase subunit D from Nitrosospira multiformis (strain ATCC 25196 / NCIMB 11849 / C 71).